The primary structure comprises 1167 residues: MEPENYLAWLARDIVRNLSYTSLVYNNPKVAIVELLDNKEAFFAYEKEQKTPEALINYIDSIVKSSISVEDKIEALLKIRYISVYVDDKSDKRDIVLQLLNRTIKKIELKTKISDELNDAINAITIESKNWKIQNSKSFKPYHYNQLVSDFIKYNEFEVLEGTDPLKWKSDTLQGLSPNYNHRTHTLISSIIYATSVRFDNYNDEQLQVLLYLFSVIRTNYVNGYLEILPNRKWSHSLADLRENKSIMMYSAKIIHASCAMISILHAVPIDYFFLAQIIASFSEIPAHAAKHLSSPMTLYIGIAQLRSNIVVSTKIAAESVATESPNISRLEESQIREWEQEMSEYPFQSSRMVRMMKKNIFDVSVDMFYAIFNCFSATFHVGHRIDNPQDAIEAQVKVEYTSDVDKEMYDQYYFLLKRMLTDQLAEYAEEMYFKYNSDVTAESLAAMANSSNGYSRSVTFLDREIKTTKKMLHLDDDLSKNLNFTNIGDQIKKGIPMGTRNVPARQTRGIFILSWQVAAIQHTIAEFLYKKAKKGGFGATFAEAYVAKAATLTYGILAEATSKADQLILYTDVSQWDASQHNTEPYRSAWINAIKEARTKYKINYNQEPVVLGMNVLDKMIEIQEALLNSNLIVESQGSKRQPLRIKYHGVASGEKTTKIGNSFANVALITTVFNNLTNTMPSIRVNHMRVDGDDNVVTMYTANRIDEVQENIKEKYKRMNAKVKALASYTGLEMAKRFIICGKIFERGAISIFTAERPYGTDLSVQSTTGSLIYSAAVNAYRGFGDNYLNFMTDVLVPPSASVKITGRLRSLLSPVTLYSTGPLSFEITPYGLGGRMRLFSLSKENMELYKILTSSLAISVQPDEIKKYSSTPQFKARVDRMISSVQIAMKSEAKIITSILRDKEEQKTLGVPNVATTKNRQQIEKARKTLSLPKETLPKVTKYYPEEIFHLILRNSTFTIPKLNTMTKVYMNNSANITKLQQQLGVRVSSGIQVHRPVNTLLKLVEKHSPIKISPSDLVLYSKKYDLTNLNGKKQFLIDLGISGNELRFYLNSKLLFHDLLLSKYDKLYESPGFGATQLNALPLDLTAAEKVFSIKLNLPNTYYELLMLILLYEYVNFVMFTGDTFRAVCIPESQTINAKLVKTVMTMIDNIQLDTVMFSDNIY.

One can recognise a RdRp catalytic domain in the interval 553 to 735 (LTYGILAEAT…KALASYTGLE (183 aa)).

The protein belongs to the reoviridae RNA-directed RNA polymerase family. Interacts with VP3 (Potential). Interacts with VP2 (Potential). Interacts with NSP5; this interaction is probably necessary for the formation of functional virus factories.

It localises to the virion. The catalysed reaction is RNA(n) + a ribonucleoside 5'-triphosphate = RNA(n+1) + diphosphate. RNA-directed RNA polymerase that is involved in both transcription and genome replication. Together with VP3 capping enzyme, forms an enzyme complex positioned near the channels situated at each of the five-fold vertices of the core. Following infection, the outermost layer of the virus is lost, leaving a double-layered particle (DLP) made up of the core and VP6 shell. VP1 then catalyzes the transcription of fully conservative plus-strand genomic RNAs that are extruded through the DLP's channels into the cytoplasm where they function as mRNAs for translation of viral proteins. One copy of each of the viral (+)RNAs is also recruited during core assembly, together with newly synthesized polymerase complexes and VP2. The polymerase of these novo-formed particles catalyzes the synthesis of complementary minus-strands leading to dsDNA formation. To do so, the polymerase specifically recognizes conserved 3' sequence(s) in plus-strand RNA templates. Once dsRNA synthesis is complete, the polymerase switches to the transcriptional mode, thus providing secondary transcription. The polypeptide is RNA-directed RNA polymerase (Rotavirus X (strain RVX/Human/China/NADRV-J19/1997/GXP[X]) (RV ADRV-N)).